The following is a 311-amino-acid chain: tRNA-cytidine(32) 2-sulfurtransferase (311 aa).

The short motif at 47–52 is the PP-loop motif element; that stretch reads SGGKDS. [4Fe-4S] cluster-binding residues include cysteine 122, cysteine 125, and cysteine 213.

It belongs to the TtcA family. As to quaternary structure, homodimer. Requires Mg(2+) as cofactor. It depends on [4Fe-4S] cluster as a cofactor.

The protein resides in the cytoplasm. It carries out the reaction cytidine(32) in tRNA + S-sulfanyl-L-cysteinyl-[cysteine desulfurase] + AH2 + ATP = 2-thiocytidine(32) in tRNA + L-cysteinyl-[cysteine desulfurase] + A + AMP + diphosphate + H(+). It participates in tRNA modification. In terms of biological role, catalyzes the ATP-dependent 2-thiolation of cytidine in position 32 of tRNA, to form 2-thiocytidine (s(2)C32). The sulfur atoms are provided by the cysteine/cysteine desulfurase (IscS) system. The protein is tRNA-cytidine(32) 2-sulfurtransferase of Salmonella heidelberg (strain SL476).